The sequence spans 695 residues: Zinc finger SWIM domain-containing protein 3 (695 aa).

Residues 434-490 (NAPKLRRTRLPSTPPRPKKPFRICGGGDTRLPVEEVEETKADSAQSQLPQPQDQSSK) are disordered. Over residues 475–489 (DSAQSQLPQPQDQSS) the composition is skewed to low complexity. The SWIM-type zinc-finger motif lies at 530 to 571 (VAVQLLENSHQVSKDGCSCSCSFQQCYHLPCRHILALLHTSQ).

The chain is Zinc finger SWIM domain-containing protein 3 (Zswim3) from Mus musculus (Mouse).